The primary structure comprises 295 residues: Protoheme IX farnesyltransferase 2 (295 aa).

Helical transmembrane passes span 9–29, 36–56, 85–105, 108–128, 135–155, 163–183, 209–229, 230–250, and 263–283; these read ITKP…FFLA, LAIF…GCVF, VALV…YYVA, LAAL…SLYL, GTLV…VAVS, LTLL…IAIF, ILLY…SGYA, GMSY…MAWT, and KLFV…SVDF.

It belongs to the UbiA prenyltransferase family. Protoheme IX farnesyltransferase subfamily.

It is found in the cell inner membrane. The enzyme catalyses heme b + (2E,6E)-farnesyl diphosphate + H2O = Fe(II)-heme o + diphosphate. It participates in porphyrin-containing compound metabolism; heme O biosynthesis; heme O from protoheme: step 1/1. In terms of biological role, converts heme B (protoheme IX) to heme O by substitution of the vinyl group on carbon 2 of heme B porphyrin ring with a hydroxyethyl farnesyl side group. This chain is Protoheme IX farnesyltransferase 2, found in Pseudomonas fluorescens (strain ATCC BAA-477 / NRRL B-23932 / Pf-5).